We begin with the raw amino-acid sequence, 30 residues long: Hemocyanin subunit 2 (30 aa).

Belongs to the tyrosinase family. Hemocyanin subfamily. Hemolymph.

Its subcellular location is the secreted. The protein resides in the extracellular space. Its function is as follows. Hemocyanins are copper-containing oxygen carriers occurring freely dissolved in the hemolymph of many mollusks and arthropods. This chain is Hemocyanin subunit 2, found in Homarus americanus (American lobster).